The chain runs to 316 residues: Cobalamin biosynthesis protein CobD (316 aa).

The next 5 helical transmembrane spans lie at 45–65 (FSPY…ALGV), 78–100 (PVLY…SLAF), 151–171 (DGVI…AMTY), 209–229 (LTWL…KGAL), and 291–311 (ISLL…FYLV).

Belongs to the CobD/CbiB family.

It is found in the cell membrane. The protein operates within cofactor biosynthesis; adenosylcobalamin biosynthesis. In terms of biological role, converts cobyric acid to cobinamide by the addition of aminopropanol on the F carboxylic group. This chain is Cobalamin biosynthesis protein CobD, found in Streptococcus sanguinis (strain SK36).